The chain runs to 221 residues: uncharacterized protein (221 aa).

A signal peptide spans 1–18 (MKRFLLLIILFGISFSFV).

This is an uncharacterized protein from Aquifex aeolicus (strain VF5).